Reading from the N-terminus, the 189-residue chain is MMKSDGNCQFRALADQLYQNSDCHELVRQEIVKQNMSLSTNSQWGDEVTLRVAADVYQVKIILITSIKLIPFMEFLPKSQKEPDKVIHMSYLAGIHFNSIYKKNKEKGSRSSSSSSSAVWMKLQRKKENEAKKKEEEEKERKDMEKEEKKKDKEDKKKDKEDKKKAKVQKEKKEKKEKKNRNHHFHYSE.

An OTU domain is found at 1 to 103 (MMKSDGNCQF…GIHFNSIYKK (103 aa)). Residue Asp-5 is part of the active site. Cys-8 serves as the catalytic Nucleophile. Residue His-96 is part of the active site. The segment at 105–189 (KEKGSRSSSS…NRNHHFHYSE (85 aa)) is disordered. The stretch at 120-181 (WMKLQRKKEN…KKEKKEKKNR (62 aa)) forms a coiled coil. 2 consecutive short sequence motifs (nuclear localization signal) follow at residues 125–132 (RKKENEAK) and 163–170 (KKKAKVQK). Positions 126-174 (KKENEAKKKEEEEKERKDMEKEEKKKDKEDKKKDKEDKKKAKVQKEKKE) are enriched in basic and acidic residues. A compositionally biased stretch (basic residues) spans 175-189 (KKEKKNRNHHFHYSE).

The protein belongs to the peptidase C85 family.

The protein localises to the nucleus. It catalyses the reaction Thiol-dependent hydrolysis of ester, thioester, amide, peptide and isopeptide bonds formed by the C-terminal Gly of ubiquitin (a 76-residue protein attached to proteins as an intracellular targeting signal).. Hydrolase that can remove conjugated ubiquitin from proteins in vitro and may therefore play an important regulatory role at the level of protein turnover by preventing degradation. In Arabidopsis thaliana (Mouse-ear cress), this protein is Putative OVARIAN TUMOR DOMAIN-containing deubiquitinating enzyme 8.